A 148-amino-acid polypeptide reads, in one-letter code: Deoxyuridine 5'-triphosphate nucleotidohydrolase (148 aa).

Residues 67–69, Asn80, 84–86, and Lys94 each bind substrate; these read RSG and TID.

This sequence belongs to the dUTPase family. It depends on Mg(2+) as a cofactor.

The enzyme catalyses dUTP + H2O = dUMP + diphosphate + H(+). Its pathway is pyrimidine metabolism; dUMP biosynthesis; dUMP from dCTP (dUTP route): step 2/2. Its function is as follows. This enzyme is involved in nucleotide metabolism: it produces dUMP, the immediate precursor of thymidine nucleotides and it decreases the intracellular concentration of dUTP so that uracil cannot be incorporated into DNA. The polypeptide is Deoxyuridine 5'-triphosphate nucleotidohydrolase (Orientia tsutsugamushi (strain Ikeda) (Rickettsia tsutsugamushi)).